Here is a 549-residue protein sequence, read N- to C-terminus: Protein EPD2 (549 aa).

Positions 1 to 20 (MISVIKSLLTLSVLSTLAAA) are cleaved as a signal peptide. The N-linked (GlcNAc...) asparagine glycan is linked to N41. C82 and C111 are oxidised to a cystine. 2 N-linked (GlcNAc...) asparagine glycosylation sites follow: N173 and N261. 5 cysteine pairs are disulfide-bonded: C224/C358, C242/C273, C381/C432, C390/C456, and C409/C414. N467 carries N-linked (GlcNAc...) asparagine glycosylation. Residues 470-518 (ASTSCSAAGGRGLQSGRRSSTTRGGSSSSRSSSSSSSSSTGSGSSNAGI) are disordered. Low complexity predominate over residues 484–514 (SGRRSSTTRGGSSSSRSSSSSSSSSTGSGSS).

Belongs to the glycosyl hydrolase 72 family.

It localises to the cell membrane. This chain is Protein EPD2 (EPD2), found in Candida maltosa (Yeast).